A 277-amino-acid chain; its full sequence is Ribosomal protein L11 methyltransferase (277 aa).

Positions 130, 151, 172, and 213 each coordinate S-adenosyl-L-methionine.

Belongs to the methyltransferase superfamily. PrmA family.

The protein localises to the cytoplasm. The enzyme catalyses L-lysyl-[protein] + 3 S-adenosyl-L-methionine = N(6),N(6),N(6)-trimethyl-L-lysyl-[protein] + 3 S-adenosyl-L-homocysteine + 3 H(+). Its function is as follows. Methylates ribosomal protein L11. The sequence is that of Ribosomal protein L11 methyltransferase from Campylobacter concisus (strain 13826).